The following is a 90-amino-acid chain: Small ribosomal subunit protein uS17 (90 aa).

It belongs to the universal ribosomal protein uS17 family. In terms of assembly, part of the 30S ribosomal subunit.

One of the primary rRNA binding proteins, it binds specifically to the 5'-end of 16S ribosomal RNA. This chain is Small ribosomal subunit protein uS17, found in Paraburkholderia phytofirmans (strain DSM 17436 / LMG 22146 / PsJN) (Burkholderia phytofirmans).